Consider the following 218-residue polypeptide: Ras-related protein Rab-11B (218 aa).

Gly-2 is subject to N-acetylglycine. Ser-20, Gly-21, Gly-23, Lys-24, Ser-25, Asn-26, Asn-37, Leu-38, Ser-40, Ser-42, and Thr-43 together coordinate GTP. Ser-25 serves as a coordination point for Mg(2+). Positions 36–47 match the Switch 1 motif; that stretch reads FNLESKSTIGVE. Positions 43 and 66 each coordinate Mg(2+). A Switch 2 motif is present at residues 67–86; it reads TAGQERYRAITSAYYRGAVG. GTP is bound by residues Gly-69, Asn-124, Lys-125, Asp-127, Ala-155, and Leu-156. Residues 183-218 form a disordered region; it reads DRSAHDESPGNNVVDISVPPTTDGQKSNKLQCCQNM. Over residues 201 to 218 the composition is skewed to polar residues; the sequence is PPTTDGQKSNKLQCCQNM. 2 S-geranylgeranyl cysteine lipidation sites follow: Cys-214 and Cys-215. Cys-215 carries the cysteine methyl ester modification. Positions 216 to 218 are cleaved as a propeptide — removed in mature form; that stretch reads QNM.

This sequence belongs to the small GTPase superfamily. Rab family. The cofactor is Mg(2+).

It is found in the recycling endosome membrane. The protein localises to the cytoplasmic vesicle. Its subcellular location is the secretory vesicle. The protein resides in the synaptic vesicle membrane. It localises to the phagosome membrane. The enzyme catalyses GTP + H2O = GDP + phosphate + H(+). Regulated by guanine nucleotide exchange factors (GEFs) which promote the exchange of bound GDP for free GTP. Regulated by GTPase activating proteins (GAPs) which increase the GTP hydrolysis activity. Inhibited by GDP dissociation inhibitors (GDIs) which prevent Rab-GDP dissociation. The small GTPases Rab are key regulators of intracellular membrane trafficking, from the formation of transport vesicles to their fusion with membranes. Rabs cycle between an inactive GDP-bound form and an active GTP-bound form that is able to recruit to membranes different set of downstream effectors directly responsible for vesicle formation, movement, tethering and fusion. That Rab plays a role in endocytic recycling, regulating apical recycling of several transmembrane proteins including cystic fibrosis transmembrane conductance regulator/CFTR, epithelial sodium channel/ENaC, potassium voltage-gated channel, and voltage-dependent L-type calcium channel. May also regulate constitutive and regulated secretion, like insulin granule exocytosis. Required for melanosome transport and release from melanocytes. Also regulates V-ATPase intracellular transport in response to extracellular acidosis. The polypeptide is Ras-related protein Rab-11B (Diplobatis ommata (Ocellated electric ray)).